The primary structure comprises 387 residues: Major outer membrane porin (387 aa).

The signal sequence occupies residues 1-22 (MKKLLKSVLAFAVLGSASSLHA).

The protein belongs to the chlamydial porin (CP) (TC 1.B.2) family. As to quaternary structure, part of a disulfide cross-linked outer membrane complex (COMC) composed of the major outer membrane porin (MOMP), the small cysteine-rich protein (OmcA) and the large cysteine-rich periplasmic protein (OmcB).

It localises to the cell outer membrane. Functionally, in elementary bodies (EBs, the infectious stage, which is able to survive outside the host cell) provides the structural integrity of the outer envelope through disulfide cross-links with the small cysteine-rich protein and the large cysteine-rich periplasmic protein. It has been described in publications as the Sarkosyl-insoluble COMC (Chlamydia outer membrane complex), and serves as the functional equivalent of peptidoglycan. Permits diffusion of specific solutes through the outer membrane. This is Major outer membrane porin (ompA) from Chlamydia muridarum (strain MoPn / Nigg).